We begin with the raw amino-acid sequence, 130 residues long: Small ribosomal subunit protein uS8A (130 aa).

The protein belongs to the universal ribosomal protein uS8 family.

This is Small ribosomal subunit protein uS8A (RpS15Aa) from Drosophila melanogaster (Fruit fly).